Reading from the N-terminus, the 460-residue chain is UDP-glycosyltransferase 91C1 (460 aa).

Residues threonine 283, 335-337 (VPQ), 352-360 (HCGWNSVVE), and 374-377 (LNEQ) each bind UDP-alpha-D-glucose.

This sequence belongs to the UDP-glycosyltransferase family.

The protein is UDP-glycosyltransferase 91C1 (UGT91C1) of Arabidopsis thaliana (Mouse-ear cress).